The sequence spans 748 residues: Catalase-peroxidase (748 aa).

The tryptophyl-tyrosyl-methioninium (Trp-Tyr) (with M-264) cross-link spans 92 to 238 (WHSAGTYRTG…LAAVQMGLIY (147 aa)). Residue histidine 93 is the Proton acceptor of the active site. The tryptophyl-tyrosyl-methioninium (Tyr-Met) (with W-92) cross-link spans 238–264 (YVNPEGPDGNPDPLLAAKDIRDTFGRM). Histidine 279 lines the heme b pocket.

The protein belongs to the peroxidase family. Peroxidase/catalase subfamily. As to quaternary structure, homodimer or homotetramer. Heme b serves as cofactor. In terms of processing, formation of the three residue Trp-Tyr-Met cross-link is important for the catalase, but not the peroxidase activity of the enzyme.

It catalyses the reaction H2O2 + AH2 = A + 2 H2O. It carries out the reaction 2 H2O2 = O2 + 2 H2O. Functionally, bifunctional enzyme with both catalase and broad-spectrum peroxidase activity. This Xanthomonas campestris pv. campestris (strain 8004) protein is Catalase-peroxidase.